Here is a 738-residue protein sequence, read N- to C-terminus: Conserved oligomeric Golgi complex subunit 4 (738 aa).

It belongs to the COG4 family. As to quaternary structure, component of the conserved oligomeric Golgi complex which is composed of eight different subunits and is required for normal Golgi morphology and localization. Interacts with COG2 and COG3.

Its subcellular location is the golgi apparatus membrane. Its function is as follows. Required for normal Golgi function. The protein is Conserved oligomeric Golgi complex subunit 4 of Arabidopsis thaliana (Mouse-ear cress).